Reading from the N-terminus, the 643-residue chain is MNANPKFLSADAHVDAAAVAPLPNSRKVYVTGSQPDIRVPMREITQADTPTGFGGEKNPPIYVYDTSGPYTDPDAKIDIRAGLPALRQRWIEARGDTEVLPGLSSQYGLERAADPATAELRFPGLHRNPRRAQPGKNVTQMHYARQGIITPEMEYIAIRENQRRAEYIESLKSSGPNGAKLAAMMGRQHPGQAFGAAAFGANALAEITPEFVRDEIARGRAIIPANINHPESEPMIIGRNFLVKINANIGNSAVTSSIGEEVDKMTWAIRWGGDTVMDLSTGKHIHETREWIIRNSPVPIGTVPIYQALEKVNGKAEDLTWEIFRDTLIEQAEQGVDYFTIHAGVRLQYVPLTANRMTGIVSRGGSIMAKWCLAHHKESFLYEHFEEICEIMKAYDVSFSLGDGLRPGSIYDANDEAQLGELKTLGELTQIAWKHDVQVMIEGPGHVPMQLIKENMDLQLDWCKEAPFYTLGPLTTDIAPGYDHITSGIGAAMIGWFGTAMLCYVTPKEHLGLPNKDDVKEGIITYKLAAHAADLAKGHPGAQVRDNALSKARFEFRWEDQFNIGLDPDKAREFHDETLPKDSAKVAHFCSMCGPHFCSMKITQDVREFAAQQGVSETEALKKGMEVKAVEFVKTGAEIYHRQ.

Substrate contacts are provided by residues Asn-248, Met-277, Tyr-306, His-342, 362-364 (SRG), 403-406 (DGLR), and Glu-442. His-446 provides a ligand contact to Zn(2+). Tyr-469 contributes to the substrate binding site. Position 510 (His-510) interacts with Zn(2+). [4Fe-4S] cluster contacts are provided by Cys-590, Cys-593, and Cys-598.

This sequence belongs to the ThiC family. In terms of assembly, homodimer. [4Fe-4S] cluster is required as a cofactor.

It catalyses the reaction 5-amino-1-(5-phospho-beta-D-ribosyl)imidazole + S-adenosyl-L-methionine = 4-amino-2-methyl-5-(phosphooxymethyl)pyrimidine + CO + 5'-deoxyadenosine + formate + L-methionine + 3 H(+). It participates in cofactor biosynthesis; thiamine diphosphate biosynthesis. Catalyzes the synthesis of the hydroxymethylpyrimidine phosphate (HMP-P) moiety of thiamine from aminoimidazole ribotide (AIR) in a radical S-adenosyl-L-methionine (SAM)-dependent reaction. The protein is Phosphomethylpyrimidine synthase of Burkholderia cenocepacia (strain HI2424).